Consider the following 125-residue polypeptide: Translation initiation factor 5A (125 aa).

Hypusine is present on Lys35.

It belongs to the eIF-5A family.

Its subcellular location is the cytoplasm. In terms of biological role, functions by promoting the formation of the first peptide bond. This is Translation initiation factor 5A (eIF5A) from Methanoregula boonei (strain DSM 21154 / JCM 14090 / 6A8).